Here is a 100-residue protein sequence, read N- to C-terminus: Large ribosomal subunit protein bL21 (100 aa).

This sequence belongs to the bacterial ribosomal protein bL21 family. Part of the 50S ribosomal subunit. Contacts protein L20.

In terms of biological role, this protein binds to 23S rRNA in the presence of protein L20. In Mycoplasma capricolum subsp. capricolum (strain California kid / ATCC 27343 / NCTC 10154), this protein is Large ribosomal subunit protein bL21.